The chain runs to 384 residues: 8-amino-7-oxononanoate synthase (384 aa).

A substrate-binding site is contributed by Arg21. 108–109 (GY) contributes to the pyridoxal 5'-phosphate binding site. Position 133 (His133) interacts with substrate. The pyridoxal 5'-phosphate site is built by Ser179, His207, and Thr233. N6-(pyridoxal phosphate)lysine is present on Lys236. Thr350 contacts substrate.

Belongs to the class-II pyridoxal-phosphate-dependent aminotransferase family. BioF subfamily. Homodimer. Pyridoxal 5'-phosphate serves as cofactor.

The enzyme catalyses 6-carboxyhexanoyl-[ACP] + L-alanine + H(+) = (8S)-8-amino-7-oxononanoate + holo-[ACP] + CO2. It functions in the pathway cofactor biosynthesis; biotin biosynthesis. Its function is as follows. Catalyzes the decarboxylative condensation of pimeloyl-[acyl-carrier protein] and L-alanine to produce 8-amino-7-oxononanoate (AON), [acyl-carrier protein], and carbon dioxide. The polypeptide is 8-amino-7-oxononanoate synthase (Buchnera aphidicola subsp. Baizongia pistaciae (strain Bp)).